Here is a 364-residue protein sequence, read N- to C-terminus: Aminomethyltransferase (364 aa).

It belongs to the GcvT family. In terms of assembly, the glycine cleavage system is composed of four proteins: P, T, L and H.

The enzyme catalyses N(6)-[(R)-S(8)-aminomethyldihydrolipoyl]-L-lysyl-[protein] + (6S)-5,6,7,8-tetrahydrofolate = N(6)-[(R)-dihydrolipoyl]-L-lysyl-[protein] + (6R)-5,10-methylene-5,6,7,8-tetrahydrofolate + NH4(+). Its function is as follows. The glycine cleavage system catalyzes the degradation of glycine. In Shewanella halifaxensis (strain HAW-EB4), this protein is Aminomethyltransferase.